We begin with the raw amino-acid sequence, 871 residues long: Dual O-methyltransferase/FAD-dependent monooxygenase CTB3 (871 aa).

The tract at residues 1–429 (MMQFQRDLEA…GLLTVRSAGQ (429 aa)) is O-methyltransferase. D279 serves as a coordination point for S-adenosyl-L-methionine. The active-site Proton acceptor is H331. The FAD-dependent monooxygenase stretch occupies residues 430 to 871 (TALSGTNTLT…NLVDCSEFVF (442 aa)). The FAD site is built by E485, R569, and A806.

This sequence in the C-terminal section; belongs to the paxM FAD-dependent monooxygenase family. It in the N-terminal section; belongs to the class I-like SAM-binding methyltransferase superfamily. Cation-independent O-methyltransferase family. COMT subfamily.

It carries out the reaction nor-toralactone + S-adenosyl-L-methionine = toralactone + S-adenosyl-L-homocysteine + H(+). It catalyses the reaction toralactone + NADH + O2 + H(+) = 1-(3,4,5-trihydroxy-7-methoxynaphthalen-2-yl)propan-2-one + CO2 + NAD(+). Its pathway is mycotoxin biosynthesis. Dual O-methyltransferase/FAD-dependent monooxygenase; part of the gene cluster that mediates the biosynthesis of cercosporin, a light-activated, non-host-selective toxin. The perylenequinone chromophore of cercosporin absorbs light energy to attain an electronically-activated triplet state and produces active oxygen species such as the hydroxyl radical, superoxide, hydrogen peroxide or singlet oxygen upon reaction with oxygen molecules. These reactive oxygen species cause damage to various cellular components including lipids, proteins and nucleic acids. The first step of cercosporin biosynthesis is performed by the polyketide synthase CTB1 which catalyzes the formation of nor-toralactone. The starter unit acyltransferase (SAT) domain of CTB1 initiates polyketide extension by the selective utilization of acetyl-CoA, which is elongated to the heptaketide in the beta-ketoacyl synthase (KS) domain by successive condensations with six malonyl units introduced by the malonyl acyltransferase (MAT) domain. The product template (PT) domain catalyzes C4-C9 and C2-C11 aldol cyclizations and dehydrations to a trihydroxynaphthalene, which is thought to be delivered to the thioesterase (TE) domain for product release. The bifunctional enzyme CTB3 then methylates nor-toralactone to toralactone before conducting an unusual oxidative aromatic ring opening. The O-methyltransferase CTB2 further methylates the nascent OH-6 of the CBT3 product, blocking further oxidation at this site before the reductase CTB6 reduces the 2-oxopropyl ketone at position C7, giving naphthalene. The FAD-dependent monooxygenase CTB5 in concert with the multicopper oxidase CTB12 are responsible for homodimerization of naphthalene with CTB7 installing the dioxepine moiety, finally producing cercosporin. The fasciclin domain-containing protein CTB11 might act with CTB5 and CTB12 whereas the roles of CTB9 and CTB10 have still to be elucidated. This is Dual O-methyltransferase/FAD-dependent monooxygenase CTB3 from Cercospora nicotianae (Barn spot disease fungus).